We begin with the raw amino-acid sequence, 857 residues long: Potassium channel AKT1 (857 aa).

At 1–61 the chain is on the cytoplasmic side; it reads MRGGALLCGQ…PYDHKYRIWE (61 aa). Residues 62-82 traverse the membrane as a helical segment; that stretch reads AFLVVLVVYTAWVSPFEFGFL. Over 83 to 90 the chain is Extracellular; sequence RKPRPPLS. A helical transmembrane segment spans residues 91–111; it reads ITDNIVNAFFAIDIIMTFFVG. Over 112-134 the chain is Cytoplasmic; sequence YLDKSTYLIVDDRKQIAFKYLRS. A helical transmembrane segment spans residues 135-155; the sequence is WFLLDLVSTIPSEAAMRISSQ. Residues 156 to 158 are Extracellular-facing; that stretch reads SYG. A helical; Voltage-sensor membrane pass occupies residues 159 to 179; that stretch reads LFNMLRLWRLRRVGALFARLE. At 180–193 the chain is on the cytoplasmic side; that stretch reads KDRNFNYFWVRCAK. Residues 194-214 traverse the membrane as a helical segment; sequence LVCVTLFAVHCAACFYYLIAA. The Extracellular segment spans residues 215 to 241; it reads RNSNPAKTWIGANVANFLEESLWMRYV. An intramembrane region (pore-forming) is located at residues 242-261; the sequence is TSMYWSITTLTTVGYGDLHP. The Extracellular segment spans residues 262–265; it reads VNTK. Residues 266–286 form a helical membrane-spanning segment; the sequence is EMIFDIFYMLFNLGLTAYLIG. Topologically, residues 287–857 are cytoplasmic; that stretch reads NMTNLVVHGT…GDHLIFATDS (571 aa). Residue 372-493 participates in a nucleoside 3',5'-cyclic phosphate binding; sequence LFRGVSNDLL…IMNNLLQHLK (122 aa). ANK repeat units follow at residues 515–546, 550–579, 583–612, 614–643, 647–676, and 680–709; these read KMDL…DPNE, NGRT…DPNC, EGSV…TIDA, DVGH…DVTR, TGTS…DVNK, and HGWT…ERRV. One can recognise a KHA domain in the interval 790–857; sequence RVTISCAEKD…GDHLIFATDS (68 aa).

It belongs to the potassium channel family. Plant (TC 1.A.1.4) subfamily. The potassium channel is probably composed of a homo- or heterotetrameric complex of pore-forming subunits. Possible heteromultimer with AKT2 or KAT3. Part of a K(+)-channel calcium-sensing kinase/phosphatase complex composed by a calcium sensor CBL (CBL1, CBL2, CBL3 or CBL9), a kinase CIPK (CIPK6, CIPK16 or CIPK23), a phosphatase PP2C (AIP1) and a K(+)-channel (AKT1). Interacts directly with AIP1, CBL10, CIPK6, CIPK16 and CIPK23. In terms of processing, phosphorylated by CIPK proteins CIPK6, CIPK16 and CIPK23. The activation by phosphorylation is induced by low K(+) conditions and stimulates K(+) uptake and relocation. Dephosphorylation by AIP1 repressed the transport activity. Preferentially expressed in the peripheral cell layers of root mature including root cortex and root hairs. Detected also, at a lower level, in the mesophyll of the leaves and at restricted sites corresponding to hydathodes and guard cells.

The protein resides in the cell membrane. Functionally, highly selective inward-rectifying potassium channel that mediate potassium uptake by plant roots in response to low K(+) conditions, by a calcium-, CBL-, and CIPK-dependent pathway. Positively regulated by phosphorylation by CIPK23. Negatively regulated by a kinase-independent regulatory mechanism involving a competing direct binding of CBL10. Involved in the stomatal regulation by monitoring the turgor pressure in guard cells. Assuming opened or closed conformations in response to the voltage difference across the membrane, the channel is activated by hyperpolarization. May interact with the cytoskeleton or with regulatory proteins. Is essential with POT5/HAK5 for high-affinity potassium uptake in roots during seedling establishment and postgermination growth under low potassium conditions. The polypeptide is Potassium channel AKT1 (AKT1) (Arabidopsis thaliana (Mouse-ear cress)).